The chain runs to 574 residues: NEDD4-binding protein 2-like 2 (574 aa).

Disordered regions lie at residues 82-110, 127-161, 182-204, and 542-574; these read HKEM…LAPA, YKPP…QKFN, ENEN…QTLS, and TQKS…TDDY. 2 stretches are compositionally biased toward basic and acidic residues: residues 129–141 and 149–161; these read PPEK…RKNE and DSKR…QKFN. Positions 162–196 form a coiled coil; sequence SKKLEIDTELSQFYKEIEELENENEASQGSCKEPE. The segment covering 563 to 574 has biased composition (polar residues); it reads GSHSQVSITDDY.

The polypeptide is NEDD4-binding protein 2-like 2 (N4bp2l2) (Rattus norvegicus (Rat)).